Reading from the N-terminus, the 202-residue chain is NAD(P)H dehydrogenase (quinone) (202 aa).

In terms of domain architecture, Flavodoxin-like spans 7 to 193; that stretch reads VLVLYYSMYG…TIARFQGRHF (187 aa). FMN contacts are provided by residues 13-18 and 82-84; these read SMYGHI and TRF. Residue Y15 coordinates NAD(+). W102 lines the substrate pocket. FMN-binding positions include 117–122 and H137; that span reads STATGG.

Belongs to the WrbA family. It depends on FMN as a cofactor.

The catalysed reaction is a quinone + NADH + H(+) = a quinol + NAD(+). It carries out the reaction a quinone + NADPH + H(+) = a quinol + NADP(+). This is NAD(P)H dehydrogenase (quinone) from Rhodospirillum rubrum (strain ATCC 11170 / ATH 1.1.1 / DSM 467 / LMG 4362 / NCIMB 8255 / S1).